Reading from the N-terminus, the 299-residue chain is ATP phosphoribosyltransferase (299 aa).

The protein belongs to the ATP phosphoribosyltransferase family. Long subfamily. In terms of assembly, equilibrium between an active dimeric form, an inactive hexameric form and higher aggregates. Interconversion between the various forms is largely reversible and is influenced by the natural substrates and inhibitors of the enzyme. It depends on Mg(2+) as a cofactor.

The protein resides in the cytoplasm. It catalyses the reaction 1-(5-phospho-beta-D-ribosyl)-ATP + diphosphate = 5-phospho-alpha-D-ribose 1-diphosphate + ATP. Its pathway is amino-acid biosynthesis; L-histidine biosynthesis; L-histidine from 5-phospho-alpha-D-ribose 1-diphosphate: step 1/9. With respect to regulation, feedback inhibited by histidine. Functionally, catalyzes the condensation of ATP and 5-phosphoribose 1-diphosphate to form N'-(5'-phosphoribosyl)-ATP (PR-ATP). Has a crucial role in the pathway because the rate of histidine biosynthesis seems to be controlled primarily by regulation of HisG enzymatic activity. This chain is ATP phosphoribosyltransferase, found in Escherichia fergusonii (strain ATCC 35469 / DSM 13698 / CCUG 18766 / IAM 14443 / JCM 21226 / LMG 7866 / NBRC 102419 / NCTC 12128 / CDC 0568-73).